Reading from the N-terminus, the 265-residue chain is 5'-nucleotidase SurE (265 aa).

Residues Asp-8, Asp-9, Ser-40, and Asn-98 each coordinate a divalent metal cation.

It belongs to the SurE nucleotidase family. Requires a divalent metal cation as cofactor.

The protein resides in the cytoplasm. The catalysed reaction is a ribonucleoside 5'-phosphate + H2O = a ribonucleoside + phosphate. Nucleotidase that shows phosphatase activity on nucleoside 5'-monophosphates. In Nostoc sp. (strain PCC 7120 / SAG 25.82 / UTEX 2576), this protein is 5'-nucleotidase SurE.